The sequence spans 445 residues: GTPase Der (445 aa).

EngA-type G domains are found at residues 3–167 and 180–353; these read PVIA…YAGQ and IKIA…AAAM. GTP contacts are provided by residues 9 to 16, 56 to 60, 119 to 122, 186 to 193, 233 to 237, and 298 to 301; these read GRPNVGKS, DTGGF, NKAE, DTAGL, and NKWD. The KH-like domain maps to 354–438; sequence AKLPTPKLTR…PLRIEFRSSN (85 aa).

Belongs to the TRAFAC class TrmE-Era-EngA-EngB-Septin-like GTPase superfamily. EngA (Der) GTPase family. Associates with the 50S ribosomal subunit.

GTPase that plays an essential role in the late steps of ribosome biogenesis. This is GTPase Der from Burkholderia ambifaria (strain MC40-6).